The primary structure comprises 476 residues: Raffinose invertase (476 aa).

Residues 35–38 (WMND), Gln-54, 97–98 (FS), 159–160 (RD), Glu-214, and Trp-297 each bind substrate. Residue Asp-38 is part of the active site.

The protein belongs to the glycosyl hydrolase 32 family. Homodimer.

The enzyme catalyses Hydrolysis of terminal non-reducing beta-D-fructofuranoside residues in beta-D-fructofuranosides.. Functionally, may prevent the potential hasard of excessive sucrose accumulation. The polypeptide is Raffinose invertase (rafD) (Escherichia coli).